Here is a 306-residue protein sequence, read N- to C-terminus: Ribosomal RNA small subunit methyltransferase H (306 aa).

Residues Gly-33–Tyr-35, Asp-51, Phe-78, Asp-96, and Gln-103 contribute to the S-adenosyl-L-methionine site.

The protein belongs to the methyltransferase superfamily. RsmH family.

It localises to the cytoplasm. The enzyme catalyses cytidine(1402) in 16S rRNA + S-adenosyl-L-methionine = N(4)-methylcytidine(1402) in 16S rRNA + S-adenosyl-L-homocysteine + H(+). Its function is as follows. Specifically methylates the N4 position of cytidine in position 1402 (C1402) of 16S rRNA. This is Ribosomal RNA small subunit methyltransferase H from Rickettsia prowazekii (strain Madrid E).